The primary structure comprises 226 residues: Transcriptional regulatory protein PcoR (226 aa).

A Response regulatory domain is found at 3–117 (RILIVEDEQK…ELVARVRTLL (115 aa)). D52 is subject to 4-aspartylphosphate. The segment at residues 125 to 223 (ATVCTIADMT…VRGAGYVLEI (99 aa)) is a DNA-binding region (ompR/PhoB-type).

Phosphorylated by PcoS.

It is found in the cytoplasm. Its function is as follows. Probable member of a two-component regulatory system PcoS/PcoR. May be involved in the activation of copper resistance gene operon pcoABCD by binding to a specific site on the cop operon promoter (copper box). This chain is Transcriptional regulatory protein PcoR (pcoR), found in Escherichia coli.